The chain runs to 170 residues: Ubiquitin-conjugating enzyme E2 J2-like (170 aa).

One can recognise a UBC core domain in the interval 15–165 (DCITRLKREF…NKTFCELFPY (151 aa)). Cys97 functions as the Glycyl thioester intermediate in the catalytic mechanism.

This sequence belongs to the ubiquitin-conjugating enzyme family.

The catalysed reaction is S-ubiquitinyl-[E1 ubiquitin-activating enzyme]-L-cysteine + [E2 ubiquitin-conjugating enzyme]-L-cysteine = [E1 ubiquitin-activating enzyme]-L-cysteine + S-ubiquitinyl-[E2 ubiquitin-conjugating enzyme]-L-cysteine.. It functions in the pathway protein modification; protein ubiquitination. Functionally, catalyzes the covalent attachment of ubiquitin to other proteins. The polypeptide is Ubiquitin-conjugating enzyme E2 J2-like (Dictyostelium discoideum (Social amoeba)).